Reading from the N-terminus, the 131-residue chain is Small ribosomal subunit protein uS11 (131 aa).

Belongs to the universal ribosomal protein uS11 family. Part of the 30S ribosomal subunit. Interacts with proteins S7 and S18. Binds to IF-3.

Located on the platform of the 30S subunit, it bridges several disparate RNA helices of the 16S rRNA. Forms part of the Shine-Dalgarno cleft in the 70S ribosome. This chain is Small ribosomal subunit protein uS11, found in Saccharophagus degradans (strain 2-40 / ATCC 43961 / DSM 17024).